A 785-amino-acid polypeptide reads, in one-letter code: uncharacterized protein (785 aa).

A PE domain is found at 1–93 (MSWVMVSPEL…GGAYAAAEAA (93 aa)).

Belongs to the mycobacterial PE family. PGRS subfamily.

This is an uncharacterized protein from Mycobacterium tuberculosis (strain CDC 1551 / Oshkosh).